The following is a 320-amino-acid chain: Foldase protein PrsA (320 aa).

Positions 1–20 (MKMINKLIVPVTASALLLGA) are cleaved as a signal peptide. Cys21 is lipidated: N-palmitoyl cysteine. The S-diacylglycerol cysteine moiety is linked to residue Cys21. One can recognise a PpiC domain in the interval 139–245 (EDSKKASHIL…FGYHIIKADK (107 aa)). The tract at residues 159–198 (EGLDDKEAKQKAEEIQKEVSKDPSKFGEIAKKESMDTGSA) is disordered.

It belongs to the PrsA family.

The protein localises to the cell membrane. The catalysed reaction is [protein]-peptidylproline (omega=180) = [protein]-peptidylproline (omega=0). In terms of biological role, plays a major role in protein secretion by helping the post-translocational extracellular folding of several secreted proteins. This chain is Foldase protein PrsA, found in Staphylococcus aureus (strain Mu3 / ATCC 700698).